A 216-amino-acid polypeptide reads, in one-letter code: MSKVSPANIRSSVETILKGSEEKKRNFTETVELQIGLKNYDPQRDKRFSGTIKLPNVPRPNMSICILGDAHDLDRAKHGGVDAMSVDDLKKLNKNKKLVKKLAKKYDAFIASEVLIKQIPRLLGPGLSKAGKFPSPVSHSDDLYGKIIEVKSTIKFQLKKVLCLGVAVGHVDMAEEQLAANLSLAINFLVSLLKKGWQNIGSLVIKSTMGKPYRLY.

A phosphoserine mark is found at S85 and S128.

Belongs to the universal ribosomal protein uL1 family. As to quaternary structure, component of the large ribosomal subunit (LSU). Mature yeast ribosomes consist of a small (40S) and a large (60S) subunit. The 40S small subunit contains 1 molecule of ribosomal RNA (18S rRNA) and at least 33 different proteins. The large 60S subunit contains 3 rRNA molecules (25S, 5.8S and 5S rRNA) and at least 46 different proteins. uL1 forms part of the L1 stalk.

Its subcellular location is the cytoplasm. Its function is as follows. Component of the ribosome, a large ribonucleoprotein complex responsible for the synthesis of proteins in the cell. The small ribosomal subunit (SSU) binds messenger RNAs (mRNAs) and translates the encoded message by selecting cognate aminoacyl-transfer RNA (tRNA) molecules. The large subunit (LSU) contains the ribosomal catalytic site termed the peptidyl transferase center (PTC), which catalyzes the formation of peptide bonds, thereby polymerizing the amino acids delivered by tRNAs into a polypeptide chain. The nascent polypeptides leave the ribosome through a tunnel in the LSU and interact with protein factors that function in enzymatic processing, targeting, and the membrane insertion of nascent chains at the exit of the ribosomal tunnel. uL1 forms part of the L1 stalk, a mobile element that plays a role in evacuating the exit-site tRNA. This is Large ribosomal subunit protein uL1A (rpl102) from Schizosaccharomyces pombe (strain 972 / ATCC 24843) (Fission yeast).